The primary structure comprises 72 residues: Translation initiation factor IF-1 (72 aa).

An S1-like domain is found at Met-1 to Arg-72.

The protein belongs to the IF-1 family. As to quaternary structure, component of the 30S ribosomal translation pre-initiation complex which assembles on the 30S ribosome in the order IF-2 and IF-3, IF-1 and N-formylmethionyl-tRNA(fMet); mRNA recruitment can occur at any time during PIC assembly.

It is found in the cytoplasm. In terms of biological role, one of the essential components for the initiation of protein synthesis. Stabilizes the binding of IF-2 and IF-3 on the 30S subunit to which N-formylmethionyl-tRNA(fMet) subsequently binds. Helps modulate mRNA selection, yielding the 30S pre-initiation complex (PIC). Upon addition of the 50S ribosomal subunit IF-1, IF-2 and IF-3 are released leaving the mature 70S translation initiation complex. In Actinobacillus pleuropneumoniae serotype 5b (strain L20), this protein is Translation initiation factor IF-1.